A 274-amino-acid chain; its full sequence is Beta-lactamase OXA-9 (274 aa).

The first 24 residues, 1-24 (MKKILLLHMLVFVSATLPISSVAS), serve as a signal peptide directing secretion. Residue serine 58 is the Acyl-ester intermediate of the active site. The residue at position 61 (lysine 61) is an N6-carboxylysine. 206 to 208 (KSG) provides a ligand contact to substrate.

The protein belongs to the class-D beta-lactamase family.

It carries out the reaction a beta-lactam + H2O = a substituted beta-amino acid. In terms of biological role, oxacillin-hydrolyzing beta-lactamase. Confers resistance to beta-lactam antibiotics but at a significantly lower level than the TEM bla gene product. The sequence is that of Beta-lactamase OXA-9 (bla) from Klebsiella aerogenes (Enterobacter aerogenes).